A 109-amino-acid polypeptide reads, in one-letter code: MAGHTENEIVIAAPLDLVWDMTNDVENWPRLFSEYASAEILEREGDRVRFRLTMHPDDEGRVWSWVSERVADRASLTVRAHRVETGPFQFMDIQWVYEQTPEGVLMRWI.

The protein to polyketide cyclases.

Its function is as follows. Involved in developmentally regulated synthesis of a compound biosynthetically related to polyketide antibiotics which is essential for spore color in Streptomyces halstedii. This is Putative polyketide cyclase (sch4) from Streptomyces halstedii.